The sequence spans 509 residues: ATP synthase subunit alpha (509 aa).

171 to 178 contacts ATP; it reads GDRKTGKT.

Belongs to the ATPase alpha/beta chains family. F-type ATPases have 2 components, CF(1) - the catalytic core - and CF(0) - the membrane proton channel. CF(1) has five subunits: alpha(3), beta(3), gamma(1), delta(1), epsilon(1). CF(0) has three main subunits: a(1), b(2) and c(9-12). The alpha and beta chains form an alternating ring which encloses part of the gamma chain. CF(1) is attached to CF(0) by a central stalk formed by the gamma and epsilon chains, while a peripheral stalk is formed by the delta and b chains.

The protein resides in the cell inner membrane. The catalysed reaction is ATP + H2O + 4 H(+)(in) = ADP + phosphate + 5 H(+)(out). Its function is as follows. Produces ATP from ADP in the presence of a proton gradient across the membrane. The alpha chain is a regulatory subunit. The protein is ATP synthase subunit alpha of Ehrlichia canis (strain Jake).